Here is a 471-residue protein sequence, read N- to C-terminus: Putative multidrug resistance protein MdtD (471 aa).

At 1–11 (MTDLPDSTRWQ) the chain is on the periplasmic side. Residues 12 to 32 (LWIVAFGFFMQSLDTTIVNTA) traverse the membrane as a helical segment. The Cytoplasmic segment spans residues 33-48 (LPSMAQSLGESPLHMH). The helical transmembrane segment at 49-69 (MVIVSYVLTVAVMLPASGWLA) threads the bilayer. The Periplasmic portion of the chain corresponds to 70–76 (DKVGVRN). Residues 77-97 (IFFTAIVLFTLGSLFCALSGT) traverse the membrane as a helical segment. The Cytoplasmic portion of the chain corresponds to 98 to 101 (LNEL). Residues 102–124 (LLARALQGVGGAMMVPVGRLTVM) traverse the membrane as a helical segment. Topologically, residues 125 to 137 (KIVPREQYMAAMT) are periplasmic. Residues 138 to 158 (FVTLPGQVGPLLGPALGGLLV) traverse the membrane as a helical segment. Over 159-164 (EYASWH) the chain is Cytoplasmic. Residues 165 to 185 (WIFLINIPVGIIGAIATLMLM) form a helical membrane-spanning segment. Residues 186 to 196 (PNYTMQTRRFD) are Periplasmic-facing. Residues 197–217 (LSGFLLLAVGMAVLTLALDGS) traverse the membrane as a helical segment. Residues 218–224 (KGTGFSP) lie on the Cytoplasmic side of the membrane. A helical transmembrane segment spans residues 225 to 245 (LAIAGLVAVGVVALVLYLLHA). Residues 246 to 262 (QNNNRALFSLKLFRTRN) are Periplasmic-facing. The helical transmembrane segment at 263-283 (FSLGLAGSFAGRIGSGMLPFM) threads the bilayer. The Cytoplasmic segment spans residues 284–285 (TP). A helical transmembrane segment spans residues 286–306 (VFLQIGLGFSPFHAGLMMIPM). At 307–341 (VLGSMGMKRIVVQVVNRFGYRRVLVATTLGLSLVT) the chain is on the periplasmic side. A helical membrane pass occupies residues 342–362 (LLFMTTALLGWYYVLPFVLFL). Topologically, residues 363 to 395 (QGMVNSTRFSSMNTLTLKDLPDNLASSGNSLLS) are cytoplasmic. The chain crosses the membrane as a helical span at residues 396–416 (MIMQLSMSIGVTIAGLLLGLF). Residues 417-430 (GSQHVSVDSGTTQT) lie on the Periplasmic side of the membrane. Residues 431-451 (VFMYTWLSMAFIIALPAFVFA) form a helical membrane-spanning segment. The Cytoplasmic portion of the chain corresponds to 452-471 (RVPSDTHQNVAISRRKRSAQ).

The protein belongs to the major facilitator superfamily. TCR/Tet family.

The protein resides in the cell inner membrane. The chain is Putative multidrug resistance protein MdtD from Escherichia coli O1:K1 / APEC.